We begin with the raw amino-acid sequence, 941 residues long: Translation initiation factor IF-2 (941 aa).

2 disordered regions span residues 61 to 204 and 249 to 274; these read IQSN…RREN and QEKD…KNNK. A compositionally biased stretch (basic and acidic residues) spans 147 to 163; that stretch reads EKAKQKLQEIQKSREAL. The span at 164–179 shows a compositional bias: low complexity; the sequence is NKLTQSNTNNANNANS. Positions 180–204 are enriched in basic and acidic residues; it reads AKKEISEVAKQEREQEHLDNKRREN. In terms of domain architecture, tr-type G spans 440 to 609; the sequence is ERPPVVTIMG…LIQADIMELK (170 aa). Positions 449 to 456 are G1; the sequence is GHVDHGKT. 449–456 provides a ligand contact to GTP; sequence GHVDHGKT. The tract at residues 474 to 478 is G2; it reads GITQH. The tract at residues 495-498 is G3; that stretch reads DTPG. Residues 495–499 and 549–552 contribute to the GTP site; these read DTPGH and NKMD. A G4 region spans residues 549 to 552; it reads NKMD. Positions 585-587 are G5; it reads SAK.

Belongs to the TRAFAC class translation factor GTPase superfamily. Classic translation factor GTPase family. IF-2 subfamily.

It is found in the cytoplasm. Its function is as follows. One of the essential components for the initiation of protein synthesis. Protects formylmethionyl-tRNA from spontaneous hydrolysis and promotes its binding to the 30S ribosomal subunits. Also involved in the hydrolysis of GTP during the formation of the 70S ribosomal complex. This Helicobacter acinonychis (strain Sheeba) protein is Translation initiation factor IF-2.